The sequence spans 323 residues: Thiamine-monophosphate kinase (323 aa).

4 residues coordinate Mg(2+): aspartate 30, serine 45, threonine 46, and aspartate 47. Histidine 54 is a binding site for substrate. The Mg(2+) site is built by aspartate 75 and aspartate 122. ATP contacts are provided by residues 121 to 122 (GD) and arginine 146. Aspartate 212 is a Mg(2+) binding site. Position 214 (serine 214) interacts with ATP. Residue aspartate 215 participates in Mg(2+) binding. Residues glutamate 263 and phenylalanine 319 each contribute to the substrate site.

The protein belongs to the thiamine-monophosphate kinase family.

It carries out the reaction thiamine phosphate + ATP = thiamine diphosphate + ADP. Its pathway is cofactor biosynthesis; thiamine diphosphate biosynthesis; thiamine diphosphate from thiamine phosphate: step 1/1. Functionally, catalyzes the ATP-dependent phosphorylation of thiamine-monophosphate (TMP) to form thiamine-pyrophosphate (TPP), the active form of vitamin B1. The polypeptide is Thiamine-monophosphate kinase (Buchnera aphidicola subsp. Schizaphis graminum (strain Sg)).